A 152-amino-acid polypeptide reads, in one-letter code: ADP-ribose glycohydrolase OARD1 (152 aa).

At alanine 2 the chain carries N-acetylalanine. Positions 2-152 (ASSLNEDPEG…TDIKITVYTL (151 aa)) constitute a Macro domain. Phosphoserine is present on serine 4. Leucine 21 provides a ligand contact to substrate. The active-site Nucleophile is lysine 84. Residues 119–125 (RIGCGLD) and leucine 152 contribute to the substrate site. Aspartate 125 serves as the catalytic Proton acceptor.

In terms of tissue distribution, ubiquitous.

It localises to the nucleus. It is found in the nucleoplasm. The protein localises to the nucleolus. Its subcellular location is the chromosome. It catalyses the reaction 2''-O-acetyl-ADP-D-ribose + H2O = ADP-D-ribose + acetate + H(+). The catalysed reaction is 5-O-(ADP-D-ribosyl)-L-glutamyl-[protein] + H2O = L-glutamyl-[protein] + ADP-D-ribose + H(+). The enzyme catalyses alpha-NAD(+) + H2O = ADP-D-ribose + nicotinamide + H(+). Subject to competitive inhibition by the product ADP-ribose. ADP-ribose glycohydrolase that hydrolyzes ADP-ribose and acts on different substrates, such as proteins ADP-ribosylated on glutamate and O-acetyl-ADP-D-ribose. Specifically acts as a glutamate mono-ADP-ribosylhydrolase by mediating the removal of mono-ADP-ribose attached to glutamate residues on proteins. Does not act on poly-ADP-ribosylated proteins: the poly-ADP-ribose chain of poly-ADP-ribosylated glutamate residues must by hydrolyzed into mono-ADP-ribosylated glutamate by PARG to become a substrate for OARD1. Deacetylates O-acetyl-ADP ribose, a signaling molecule generated by the deacetylation of acetylated lysine residues in histones and other proteins. Catalyzes the deacylation of O-acetyl-ADP-ribose, O-propionyl-ADP-ribose and O-butyryl-ADP-ribose, yielding ADP-ribose plus acetate, propionate and butyrate, respectively. This Homo sapiens (Human) protein is ADP-ribose glycohydrolase OARD1.